We begin with the raw amino-acid sequence, 172 residues long: Adenine phosphoribosyltransferase (172 aa).

The protein belongs to the purine/pyrimidine phosphoribosyltransferase family. In terms of assembly, homodimer.

The protein resides in the cytoplasm. The enzyme catalyses AMP + diphosphate = 5-phospho-alpha-D-ribose 1-diphosphate + adenine. It participates in purine metabolism; AMP biosynthesis via salvage pathway; AMP from adenine: step 1/1. Its function is as follows. Catalyzes a salvage reaction resulting in the formation of AMP, that is energically less costly than de novo synthesis. This chain is Adenine phosphoribosyltransferase, found in Prochlorococcus marinus (strain SARG / CCMP1375 / SS120).